A 362-amino-acid polypeptide reads, in one-letter code: MERIVVTLGERSYPITIASGLFNEPASFLPLKSGEQVMLVTNETLAPLYLDKVRGVLEQAGVNVDSVILPDGEQYKSLAVLDTVFTALLQKPHGRDTTLVALGGGVVGDLTGFAAASYQRGVRFIQVPTTLLSQVDSSVGGKTAVNHPLGKNMIGAFYQPASVVVDLDCLKTLPPRELASGLAEVIKYGIILDGTFFNWLEENLDALLRLDGPAMAYCIRRCCELKAEVVAADERETGLRALLNLGHTFGHAIEAEMGYGNWLHGEAVAAGMVMAARTSERLGQFSSAETQRIITLLTRAGLPVNGPREMSAQAYLPHMLRDKKVLAGEMRLILPLAIGKSEVRSGVSHELVLNAIADCQSA.

Residues 71–76 (DGEQYK), 105–109 (GVVGD), 129–130 (TT), lysine 142, lysine 151, and 169–172 (CLKT) contribute to the NAD(+) site. 3 residues coordinate Zn(2+): glutamate 184, histidine 247, and histidine 264.

Belongs to the sugar phosphate cyclases superfamily. Dehydroquinate synthase family. Requires NAD(+) as cofactor. Co(2+) is required as a cofactor. The cofactor is Zn(2+).

It is found in the cytoplasm. The catalysed reaction is 7-phospho-2-dehydro-3-deoxy-D-arabino-heptonate = 3-dehydroquinate + phosphate. It functions in the pathway metabolic intermediate biosynthesis; chorismate biosynthesis; chorismate from D-erythrose 4-phosphate and phosphoenolpyruvate: step 2/7. Its function is as follows. Catalyzes the conversion of 3-deoxy-D-arabino-heptulosonate 7-phosphate (DAHP) to dehydroquinate (DHQ). The polypeptide is 3-dehydroquinate synthase (Escherichia coli O157:H7).